The following is a 465-amino-acid chain: Poly(A) polymerase I (465 aa).

Catalysis depends on residues Asp80, Asp82, and Asp162. The tract at residues 430 to 465 (APPEQKGMLNELDDDPAPRRRRSRPRKRAPRREGTV) is disordered. Positions 448–459 (RRRRSRPRKRAP) are enriched in basic residues.

The protein belongs to the tRNA nucleotidyltransferase/poly(A) polymerase family.

The catalysed reaction is RNA(n) + ATP = RNA(n)-3'-adenine ribonucleotide + diphosphate. In terms of biological role, adds poly(A) tail to the 3' end of many RNAs, which usually targets these RNAs for decay. Plays a significant role in the global control of gene expression, through influencing the rate of transcript degradation, and in the general RNA quality control. The sequence is that of Poly(A) polymerase I from Salmonella typhimurium (strain LT2 / SGSC1412 / ATCC 700720).